The primary structure comprises 770 residues: Protein PAT1 homolog 1 (770 aa).

The tract at residues Met1–Asp26 is disordered. Residues Met1–Glu84 form a region A; interaction with DDX6/RCK region. The involved in nuclear foci localization stretch occupies residues Met1 to Arg397. The segment covering Leu7–Asp26 has biased composition (acidic residues). Residues Asn85–His388 form a region N; interaction with decapping machinery region. A Nuclear export signal motif is present at residues Leu86–Ile95. Phosphoserine is present on Ser177. Thr178 is subject to Phosphothreonine. A phosphoserine mark is found at Ser179 and Ser184. The residue at position 194 (Thr194) is a Phosphothreonine. An asymmetric dimethylarginine mark is found at Arg217, Arg223, and Arg263. An involved in RNA-binding region spans residues Arg223–Arg397. The residue at position 278 (Ser278) is a Phosphoserine. Arg284 carries the post-translational modification Asymmetric dimethylarginine. The segment covering Gly314–Pro323 has biased composition (low complexity). Disordered regions lie at residues Gly314 to Arg344 and Gln360 to Asp399. Pro residues predominate over residues Ser324–Gly337. Residues Gln367–Asn380 show a composition bias toward low complexity. At Arg385 the chain carries Omega-N-methylarginine. Basic and acidic residues predominate over residues Arg385–Asp399. Positions Arg389–Glu448 are region H. The interval Lys398–Arg770 is involved in nuclear speckle localization. Residues Ile449–Arg770 form a region C region.

Belongs to the PAT1 family. As to quaternary structure, interacts (via region A) with DDX6/RCK. Interacts (via region H and region C) with LSM1 and LSM4. Interacts (via region N) with DCP1A, DCP2, EDC3, EDC4 and XRN1. Interacts with the CCR4-NOT complex. Interacts with the Lsm-containing SMN-Sm protein complex. Interacts with EIF4ENIF1/4E-T. As to expression, ubiquitous.

Its subcellular location is the cytoplasm. The protein resides in the P-body. It localises to the nucleus. The protein localises to the PML body. It is found in the nucleus speckle. Functionally, RNA-binding protein involved in deadenylation-dependent decapping of mRNAs, leading to the degradation of mRNAs. Acts as a scaffold protein that connects deadenylation and decapping machinery. Required for cytoplasmic mRNA processing body (P-body) assembly. Its function is as follows. (Microbial infection) In case of infection, required for translation and replication of hepatitis C virus (HCV). This Homo sapiens (Human) protein is Protein PAT1 homolog 1 (PATL1).